Consider the following 1770-residue polypeptide: Serine/threonine-protein kinase RIM15 (1770 aa).

Residues 334–358 (HSLSTFPQDNGNNNNNNNNNNNNNN) form a disordered region. The segment covering 343–358 (NGNNNNNNNNNNNNNN) has biased composition (low complexity). 2 positions are modified to phosphoserine: Ser-380 and Ser-476. Disordered regions lie at residues 530–563 (TPTANDIRHPSPLPRSCSNTVMKLPTPRRKLDSN) and 583–694 (STIS…NSVL). Residues 583–601 (STISIDRDNNTNSRGSSMK) show a composition bias toward polar residues. Positions 611–632 (SRTSNSERPSSSSSRLGIRSRS) are enriched in low complexity. The segment covering 637–660 (QKIEYSHVDNDDRTNEMLSRDKDS) has biased composition (basic and acidic residues). Low complexity predominate over residues 669-692 (TTITSSTQATTTGTKTNSNNSTNS). The residue at position 704 (Thr-704) is a Phosphothreonine. Phosphoserine is present on residues Ser-709, Ser-733, Ser-736, and Ser-737. A Phosphothreonine modification is found at Thr-747. One can recognise a Protein kinase domain in the interval 794-1254 (YDILKPISKG…IQEIKDHPYF (461 aa)). Residues 800–808 (ISKGAYGSV) and Lys-823 each bind ATP. Residue Asp-918 is the Proton acceptor of the active site. Residues 970–980 (NNFTMNNNNSN) show a composition bias toward low complexity. The disordered stretch occupies residues 970 to 1032 (NNFTMNNNNS…MTPTPSTNTV (63 aa)). A compositionally biased stretch (polar residues) spans 981–990 (HSQLSTPDSF). A compositionally biased stretch (low complexity) spans 1014 to 1031 (YSSTSNSHSMTPTPSTNT). Ser-1044, Ser-1048, and Ser-1064 each carry phosphoserine. Thr-1075 carries the phosphothreonine; by PHO85 modification. One can recognise an AGC-kinase C-terminal domain in the interval 1255–1320 (KNVDWDHVYD…NTDVSELSAA (66 aa)). Low complexity predominate over residues 1378 to 1391 (TGYITPNGTGTTTT). A disordered region spans residues 1378 to 1403 (TGYITPNGTGTTTTSAKNSPNLKNLS). Residues 1392 to 1401 (SAKNSPNLKN) are compositionally biased toward polar residues. A Phosphoserine modification is found at Ser-1421. Disordered regions lie at residues 1448-1507 (KSEH…STFG) and 1519-1572 (FSTR…PANT). The span at 1463-1481 (SSASLMGSSSDGSVSTPGS) shows a compositional bias: low complexity. Residues Ser-1531, Ser-1538, Ser-1542, and Ser-1565 each carry the phosphoserine modification. Residues 1636–1750 (DVLVCEPIPI…ELKKLVAKYA (115 aa)) form the Response regulatory domain. Residue Ser-1764 is modified to Phosphoserine.

Belongs to the protein kinase superfamily. Ser/Thr protein kinase family. Interacts with the cyclin-dependent kinase (CDK) PHO85 and IGO1. In terms of processing, autophosphorylated. Phosphorylation by PKA strongly inhibits kinase activity. Phosphorylation by cyclin-CDK PHO80-PHO85 under favorable growth condition causes inactivation of RIM15 by promoting its export to the cytoplasm.

The protein resides in the cytoplasm. It localises to the nucleus. The enzyme catalyses L-seryl-[protein] + ATP = O-phospho-L-seryl-[protein] + ADP + H(+). It carries out the reaction L-threonyl-[protein] + ATP = O-phospho-L-threonyl-[protein] + ADP + H(+). With respect to regulation, kinase activity is inhibited by phosphorylation by cAMP-dependent protein kinase (PKA). Functionally, protein kinase that positively regulates proper entry into stationary phase of cells under nutrient starvation conditions. Involved in glycogen and trehalose accumulation, derepression of stress-induced genes, induction of thermotolerance and starvation resistance, and proper G1 cell cycle arrest. Also involved in the activation of a meiotic genes activation pathway. Phosphorylates IGO1 and IGO2, both involved in the TORC1 control of gene expression and chronological life span. The protein is Serine/threonine-protein kinase RIM15 (RIM15) of Saccharomyces cerevisiae (strain ATCC 204508 / S288c) (Baker's yeast).